Here is a 223-residue protein sequence, read N- to C-terminus: Deoxyribose-phosphate aldolase (223 aa).

The active-site Proton donor/acceptor is Asp89. The Schiff-base intermediate with acetaldehyde role is filled by Lys152. Lys181 acts as the Proton donor/acceptor in catalysis.

This sequence belongs to the DeoC/FbaB aldolase family. DeoC type 1 subfamily.

It localises to the cytoplasm. The enzyme catalyses 2-deoxy-D-ribose 5-phosphate = D-glyceraldehyde 3-phosphate + acetaldehyde. It participates in carbohydrate degradation; 2-deoxy-D-ribose 1-phosphate degradation; D-glyceraldehyde 3-phosphate and acetaldehyde from 2-deoxy-alpha-D-ribose 1-phosphate: step 2/2. Its function is as follows. Catalyzes a reversible aldol reaction between acetaldehyde and D-glyceraldehyde 3-phosphate to generate 2-deoxy-D-ribose 5-phosphate. In Bacillus subtilis (strain 168), this protein is Deoxyribose-phosphate aldolase.